The following is a 512-amino-acid chain: Cytochrome P450 77A4 (512 aa).

Residues 9–29 (PTSLDFTFFAIIISGFVFIIT) form a helical membrane-spanning segment. C456 lines the heme pocket.

The protein belongs to the cytochrome P450 family. The cofactor is heme.

It localises to the membrane. Functionally, catalyzes the epoxidation of physiological unsaturated fatty acids in vitro. Can use laurate, oleate, linoleate, linolenate and vernolate as substrate. The protein is Cytochrome P450 77A4 (CYP77A4) of Arabidopsis thaliana (Mouse-ear cress).